The following is a 131-amino-acid chain: Universal stress protein C (131 aa).

It belongs to the universal stress protein A family.

The protein resides in the cytoplasm. Its function is as follows. Required for resistance to DNA-damaging agents. This chain is Universal stress protein C (uspC), found in Salmonella typhi.